The primary structure comprises 405 residues: MAKGTFERTKPHVNIGTIGHVDHGKTTLTAAITFTAASADPTIETLAYDQIDKAPEEKARGITINTAHVEYQTETRHYSHVDCPGHADYVKNMITGAAQMDGAILVVSSADGPMPQTREHILLARQVGVPYIVVFMNKVDMVDDEELLELVEMEVRELLSKYEFPGDDLPVVKGSALRALEALQSNPKMARGTDKWVDYIWELLDAVDSYIPTPERDTDKTFLMPVEDVFTITGRGTVATGRVERGTVKVQDEVEIVGLTDTRKTTVTGIEMHRKLLDSGMAGDNVGVLLRGVARDDVERGQVLAKPGSIKPHTKFEASVYVLSKDEGGRHSAFFGGYRPQFYFRTTDVTGVVELQEGVEMVMPGDNVTFTVELIKPIAMEEGLRFAIREGGRTVGAGVVSKVLE.

Positions 10–215 (KPHVNIGTIG…AVDSYIPTPE (206 aa)) constitute a tr-type G domain. Residues 19–26 (GHVDHGKT) are G1. 19–26 (GHVDHGKT) is a binding site for GTP. Position 26 (Thr26) interacts with Mg(2+). A G2 region spans residues 61-65 (GITIN). Residues 82–85 (DCPG) are G3. GTP-binding positions include 82 to 86 (DCPGH) and 137 to 140 (NKVD). Positions 137 to 140 (NKVD) are G4. The G5 stretch occupies residues 175 to 177 (SAL).

It belongs to the TRAFAC class translation factor GTPase superfamily. Classic translation factor GTPase family. EF-Tu/EF-1A subfamily. As to quaternary structure, monomer.

It localises to the cytoplasm. The catalysed reaction is GTP + H2O = GDP + phosphate + H(+). Its function is as follows. GTP hydrolase that promotes the GTP-dependent binding of aminoacyl-tRNA to the A-site of ribosomes during protein biosynthesis. In Deinococcus radiodurans (strain ATCC 13939 / DSM 20539 / JCM 16871 / CCUG 27074 / LMG 4051 / NBRC 15346 / NCIMB 9279 / VKM B-1422 / R1), this protein is Elongation factor Tu.